The chain runs to 127 residues: Fluoride-specific ion channel FluC (127 aa).

4 helical membrane passes run 4 to 24 (LSVL…RYLI), 38 to 58 (YGTL…IAAF), 71 to 91 (IIGL…MDNV), and 104 to 124 (LNVL…FQLL). Gly-78 and Thr-81 together coordinate Na(+).

The protein belongs to the fluoride channel Fluc/FEX (TC 1.A.43) family.

The protein localises to the cell inner membrane. The enzyme catalyses fluoride(in) = fluoride(out). With respect to regulation, na(+) is not transported, but it plays an essential structural role and its presence is essential for fluoride channel function. Fluoride-specific ion channel. Important for reducing fluoride concentration in the cell, thus reducing its toxicity. This Vibrio campbellii (strain ATCC BAA-1116) protein is Fluoride-specific ion channel FluC.